The chain runs to 549 residues: Probable protein kinase UbiB (549 aa).

Residues 123–501 (DFNDTPLASA…QQKSHKSNYL (379 aa)) form the Protein kinase domain. ATP is bound by residues 129–137 (LASASISQV) and lysine 152. The active-site Proton acceptor is aspartate 287. Transmembrane regions (helical) follow at residues 498 to 518 (SNYLLITSAVLLICGTILFTQ) and 519 to 539 (IVTLWPAYTCIGAGILIWAIG).

Belongs to the ABC1 family. UbiB subfamily.

The protein resides in the cell inner membrane. It functions in the pathway cofactor biosynthesis; ubiquinone biosynthesis [regulation]. Is probably a protein kinase regulator of UbiI activity which is involved in aerobic coenzyme Q (ubiquinone) biosynthesis. The sequence is that of Probable protein kinase UbiB from Shewanella frigidimarina (strain NCIMB 400).